A 180-amino-acid polypeptide reads, in one-letter code: UPF0134 protein MPN_368 (180 aa).

It belongs to the UPF0134 family.

This chain is UPF0134 protein MPN_368, found in Mycoplasma pneumoniae (strain ATCC 29342 / M129 / Subtype 1) (Mycoplasmoides pneumoniae).